The sequence spans 163 residues: Putative 4-hydroxy-4-methyl-2-oxoglutarate aldolase (163 aa).

Substrate contacts are provided by residues 76–79 and R98; that span reads GDML. Residue D99 coordinates a divalent metal cation.

This sequence belongs to the class II aldolase/RraA-like family. In terms of assembly, homotrimer. A divalent metal cation serves as cofactor.

The enzyme catalyses 4-hydroxy-4-methyl-2-oxoglutarate = 2 pyruvate. It catalyses the reaction oxaloacetate + H(+) = pyruvate + CO2. In terms of biological role, catalyzes the aldol cleavage of 4-hydroxy-4-methyl-2-oxoglutarate (HMG) into 2 molecules of pyruvate. Also contains a secondary oxaloacetate (OAA) decarboxylase activity due to the common pyruvate enolate transition state formed following C-C bond cleavage in the retro-aldol and decarboxylation reactions. The polypeptide is Putative 4-hydroxy-4-methyl-2-oxoglutarate aldolase (Pseudomonas fluorescens (strain ATCC BAA-477 / NRRL B-23932 / Pf-5)).